An 86-amino-acid polypeptide reads, in one-letter code: Small ribosomal subunit protein bS20 (86 aa).

A compositionally biased stretch (basic residues) spans 1 to 11 (MANIKQQKKRN). A disordered region spans residues 1–21 (MANIKQQKKRNKTNEKRRLQN).

The protein belongs to the bacterial ribosomal protein bS20 family.

Its function is as follows. Binds directly to 16S ribosomal RNA. The protein is Small ribosomal subunit protein bS20 of Onion yellows phytoplasma (strain OY-M).